A 272-amino-acid polypeptide reads, in one-letter code: Shikimate dehydrogenase (NADP(+)) (272 aa).

Shikimate-binding positions include 14 to 16 (SKS) and Thr-61. The active-site Proton acceptor is the Lys-65. Glu-77 is a binding site for NADP(+). Asn-86 and Asp-102 together coordinate shikimate. NADP(+) contacts are provided by residues 126–130 (GAGGA), 149–154 (NRTASR), and Met-213. Tyr-215 contributes to the shikimate binding site. Gly-237 is an NADP(+) binding site.

The protein belongs to the shikimate dehydrogenase family. Homodimer.

It catalyses the reaction shikimate + NADP(+) = 3-dehydroshikimate + NADPH + H(+). Its pathway is metabolic intermediate biosynthesis; chorismate biosynthesis; chorismate from D-erythrose 4-phosphate and phosphoenolpyruvate: step 4/7. In terms of biological role, involved in the biosynthesis of the chorismate, which leads to the biosynthesis of aromatic amino acids. Catalyzes the reversible NADPH linked reduction of 3-dehydroshikimate (DHSA) to yield shikimate (SA). In Salmonella choleraesuis (strain SC-B67), this protein is Shikimate dehydrogenase (NADP(+)).